A 395-amino-acid polypeptide reads, in one-letter code: NAD(P)H-quinone oxidoreductase subunit H (395 aa).

It belongs to the complex I 49 kDa subunit family. As to quaternary structure, NDH-1 can be composed of about 15 different subunits; different subcomplexes with different compositions have been identified which probably have different functions.

The protein resides in the cellular thylakoid membrane. It carries out the reaction a plastoquinone + NADH + (n+1) H(+)(in) = a plastoquinol + NAD(+) + n H(+)(out). The catalysed reaction is a plastoquinone + NADPH + (n+1) H(+)(in) = a plastoquinol + NADP(+) + n H(+)(out). Its function is as follows. NDH-1 shuttles electrons from an unknown electron donor, via FMN and iron-sulfur (Fe-S) centers, to quinones in the respiratory and/or the photosynthetic chain. The immediate electron acceptor for the enzyme in this species is believed to be plastoquinone. Couples the redox reaction to proton translocation, and thus conserves the redox energy in a proton gradient. Cyanobacterial NDH-1 also plays a role in inorganic carbon-concentration. This is NAD(P)H-quinone oxidoreductase subunit H from Prochlorococcus marinus subsp. pastoris (strain CCMP1986 / NIES-2087 / MED4).